Here is a 171-residue protein sequence, read N- to C-terminus: Pro-corazonin (171 aa).

Positions M1–A20 are cleaved as a signal peptide. A Pyrrolidone carboxylic acid modification is found at Q21. N31 is subject to Asparagine amide. A propeptide spanning residues F82–A171 is cleaved from the precursor.

Belongs to the corazonin family.

The protein localises to the secreted. Its function is as follows. Cardioactive peptide. Corazonin is probably involved in the physiological regulation of the heart beat. This chain is Pro-corazonin, found in Anopheles gambiae (African malaria mosquito).